Here is a 753-residue protein sequence, read N- to C-terminus: Nibrin (753 aa).

Residues 22 to 81 (YVVGRKNCAFLIQDDQSISRSHAVLTVSRPETTHSQSVSVPVLTIKDTSKYGTFVNGSKL) enclose the FHA domain. 2 consecutive BRCT domains span residues 101–191 (SKFR…PTPE) and 221–311 (GKTF…LAVI). Serine 274 carries the post-translational modification Phosphoserine. Serine 343 carries the phosphoserine; by ATM modification. Residues 442–606 (RECTPRQQSN…NTKQREENEM (165 aa)) are disordered. Residues 446–455 (PRQQSNSITN) are compositionally biased toward polar residues. Positions 461–467 (RKRERAE) match the Nuclear localization signal motif. The span at 490-500 (CTESSASSAWN) shows a compositional bias: polar residues. Residues 517–528 (ESGELASDKTDI) show a composition bias toward basic and acidic residues. Residues 568-577 (QTANGDQEAQ) show a composition bias toward polar residues. Positions 585-606 (CLETKGSRTEEGNTKQREENEM) are enriched in basic and acidic residues. Residues 739 to 748 (ADDLFRYDPN) carry the FxF/Y motif motif.

This sequence belongs to the Nibrin family. In terms of assembly, component of the MRN complex composed of two heterodimers RAD50 and mre11 associated with a single NBN.

The protein localises to the nucleus. It localises to the chromosome. The protein resides in the PML body. Its subcellular location is the telomere. Its function is as follows. Component of the MRN complex, which plays a central role in double-strand break (DSB) repair, DNA recombination, maintenance of telomere integrity and meiosis. The MRN complex is involved in the repair of DNA double-strand breaks (DSBs) via homologous recombination (HR), an error-free mechanism which primarily occurs during S and G2 phases. The complex (1) mediates the end resection of damaged DNA, which generates proper single-stranded DNA, a key initial steps in HR, and is (2) required for the recruitment of other repair factors and efficient activation of ATM and ATR upon DNA damage. The MRN complex possesses single-strand endonuclease activity and double-strand-specific 3'-5' exonuclease activity, which are provided by MRE11, to initiate end resection, which is required for single-strand invasion and recombination. Within the MRN complex, NBN acts as a protein-protein adapter, which specifically recognizes and binds phosphorylated proteins, promoting their recruitment to DNA damage sites. Recruits MRE11 and RAD50 components of the MRN complex to DSBs in response to DNA damage. Promotes the recruitment of PI3/PI4-kinase family members ATM, ATR, and probably DNA-PKcs to the DNA damage sites, activating their functions. Mediates the recruitment of phosphorylated RBBP8/CtIP to DSBs, leading to cooperation between the MRN complex and RBBP8/CtIP to initiate end resection. The MRN complex and rbbp8/CtIP are also required for chromosome alignment during metaphase. The chain is Nibrin (NBN) from Gallus gallus (Chicken).